The primary structure comprises 268 residues: MICOS complex subunit MIC27 (268 aa).

Residues 1–27 constitute a mitochondrion transit peptide; that stretch reads MAAIRMGKLTTMPAGLIYASVSVHAAK. Residues 28–110 are Mitochondrial intermembrane-facing; that stretch reads QEESKKQLVK…YVYLKNPPRD (83 aa). A helical transmembrane segment spans residues 111–129; that stretch reads FLPKMGVITVSGLAGLVSA. Residues 130 to 137 lie on the Mitochondrial matrix side of the membrane; it reads RKGSKFKK. Residues 138–155 traverse the membrane as a helical segment; that stretch reads ITYPLGLATLGATVCYPV. Residues 156–268 lie on the Mitochondrial intermembrane side of the membrane; it reads QSVIIAKVTA…EDIDMYSTRS (113 aa). A compositionally biased stretch (basic and acidic residues) spans 187–200; the sequence is SKEESLPKPKEKTK. A disordered region spans residues 187–268; the sequence is SKEESLPKPK…EDIDMYSTRS (82 aa). Phosphoserine is present on Ser-204. The span at 249–260 shows a compositional bias: basic and acidic residues; that stretch reads KLMDHGQSHPED.

The protein belongs to the apolipoprotein O/MICOS complex subunit Mic27 family. Component of the mitochondrial contact site and cristae organizing system (MICOS) complex, composed of at least MICOS10/MIC10, CHCHD3/MIC19, CHCHD6/MIC25, APOOL/MIC27, IMMT/MIC60, APOO/MIC23/MIC26 and MICOS13/MIC13. This complex was also known under the names MINOS or MitOS complex. The MICOS complex associates with mitochondrial outer membrane proteins SAMM50, MTX1 and MTX2 (together described as components of the mitochondrial outer membrane sorting assembly machinery (SAM) complex) and DNAJC11, mitochondrial inner membrane protein TMEM11 and with HSPA9. The MICOS and SAM complexes together with DNAJC11 are part of a large protein complex spanning both membranes termed the mitochondrial intermembrane space bridging (MIB) complex. Interacts with MICOS10/MIC10, IMMT/MIC60 and APOO/MIC23/MIC26.

The protein resides in the mitochondrion inner membrane. It localises to the mitochondrion. Its function is as follows. Component of the MICOS complex, a large protein complex of the mitochondrial inner membrane that plays crucial roles in the maintenance of crista junctions, inner membrane architecture, and formation of contact sites to the outer membrane. Specifically binds to cardiolipin (in vitro) but not to the precursor lipid phosphatidylglycerol. Plays a crucial role in crista junction formation and mitochondrial function,. This Homo sapiens (Human) protein is MICOS complex subunit MIC27 (APOOL).